The sequence spans 190 residues: Threonylcarbamoyl-AMP synthase (190 aa).

One can recognise a YrdC-like domain in the interval 10-190; it reads PQDKESVYRH…DWHSRQVIRA (181 aa).

The protein belongs to the SUA5 family. TsaC subfamily.

The protein localises to the cytoplasm. It carries out the reaction L-threonine + hydrogencarbonate + ATP = L-threonylcarbamoyladenylate + diphosphate + H2O. Required for the formation of a threonylcarbamoyl group on adenosine at position 37 (t(6)A37) in tRNAs that read codons beginning with adenine. Catalyzes the conversion of L-threonine, HCO(3)(-)/CO(2) and ATP to give threonylcarbamoyl-AMP (TC-AMP) as the acyladenylate intermediate, with the release of diphosphate. The sequence is that of Threonylcarbamoyl-AMP synthase from Dichelobacter nodosus (strain VCS1703A).